A 438-amino-acid polypeptide reads, in one-letter code: Xylose isomerase (438 aa).

Active-site residues include His-100 and Asp-103. Residues Glu-231, Glu-267, His-270, Asp-295, Asp-306, Asp-308, and Asp-338 each coordinate Mg(2+).

Belongs to the xylose isomerase family. As to quaternary structure, homotetramer. It depends on Mg(2+) as a cofactor.

It localises to the cytoplasm. It carries out the reaction alpha-D-xylose = alpha-D-xylulofuranose. The sequence is that of Xylose isomerase from Pseudomonas syringae pv. syringae (strain B728a).